Here is a 398-residue protein sequence, read N- to C-terminus: Stearoyl-[acyl-carrier-protein] 9-desaturase, chloroplastic (398 aa).

A chloroplast-targeting transit peptide spans 1 to 34 (MALKLNPLASQPYNFPSSARPPISTFRSPKFLCL). Fe cation is bound by residues Glu-140, Glu-178, His-181, Glu-231, Glu-264, and His-267.

The protein belongs to the fatty acid desaturase type 2 family. As to quaternary structure, homodimer. Requires Fe(2+) as cofactor.

Its subcellular location is the plastid. It is found in the chloroplast. The enzyme catalyses octadecanoyl-[ACP] + 2 reduced [2Fe-2S]-[ferredoxin] + O2 + 2 H(+) = (9Z)-octadecenoyl-[ACP] + 2 oxidized [2Fe-2S]-[ferredoxin] + 2 H2O. It functions in the pathway lipid metabolism; fatty acid metabolism. In terms of biological role, converts stearoyl-ACP to oleoyl-ACP by introduction of a cis double bond between carbons 9 and 10 of the acyl chain. The polypeptide is Stearoyl-[acyl-carrier-protein] 9-desaturase, chloroplastic (Brassica napus (Rape)).